The following is a 184-amino-acid chain: Photosystem I assembly protein Ycf4 (184 aa).

Transmembrane regions (helical) follow at residues 19–39 (ISNF…VLVG) and 64–84 (LVMS…WCTI).

The protein belongs to the Ycf4 family.

It is found in the plastid. It localises to the chloroplast thylakoid membrane. In terms of biological role, seems to be required for the assembly of the photosystem I complex. This is Photosystem I assembly protein Ycf4 from Oenothera elata subsp. hookeri (Hooker's evening primrose).